The primary structure comprises 322 residues: uncharacterized protein (322 aa).

A disordered region spans residues Q269 to Q289.

This is an uncharacterized protein from Sinorhizobium fredii (strain NBRC 101917 / NGR234).